Reading from the N-terminus, the 1085-residue chain is Ubiquitin carboxyl-terminal hydrolase 36 (1085 aa).

Residues G23 to A36 show a composition bias toward low complexity. Disordered regions lie at residues G23–Q47 and K104–K149. One can recognise a USP domain in the interval T173 to D481. The Nucleophile role is filled by C182. The Proton acceptor role is filled by H440. 4 disordered regions span residues A489 to K730, K745 to K888, E963 to Q1030, and K1043 to S1085. Residues S503–T518 show a composition bias toward low complexity. Phosphoserine occurs at positions 514 and 516. Positions G532 to A542 are enriched in polar residues. The span at N588 to N609 shows a compositional bias: low complexity. Over residues M642–K651 the composition is skewed to basic and acidic residues. T660 and T664 each carry phosphothreonine. 2 positions are modified to phosphoserine: S674 and S676. The span at T705–K730 shows a compositional bias: polar residues. S749 carries the post-translational modification Phosphoserine. A compositionally biased stretch (acidic residues) spans S749–S758. Over residues P768 to A778 the composition is skewed to low complexity. The segment covering P779–P788 has biased composition (pro residues). The residue at position 781 (S781) is a Phosphoserine. A Phosphothreonine modification is found at T784. Phosphoserine is present on S787. Residues E805–E818 show a composition bias toward acidic residues. Residues K822–P844 are compositionally biased toward polar residues. T825 is modified (phosphothreonine). Phosphoserine is present on S843. Position 846 is a phosphothreonine (T846). The segment covering P859–N884 has biased composition (polar residues). 2 stretches are compositionally biased toward low complexity: residues S987–S998 and Q1056–A1066.

This sequence belongs to the peptidase C19 family. In terms of assembly, interacts with atms/PAF1, but not with CycT.

The protein resides in the nucleus. Its subcellular location is the nucleolus. The catalysed reaction is Thiol-dependent hydrolysis of ester, thioester, amide, peptide and isopeptide bonds formed by the C-terminal Gly of ubiquitin (a 76-residue protein attached to proteins as an intracellular targeting signal).. Functionally, required for maintaining multiple types of adult stem cells, including male and female germline, epithelial follicle cell and intestinal stem cells. May function as a transcriptional repressor by continually deubiquiting histone H2B at the promoters of genes critical for cellular differentiation, thereby preventing histone H3 'Lys-4' trimethylation (H3K4). Controls selective autophagy activation by ubiquitinated proteins. The chain is Ubiquitin carboxyl-terminal hydrolase 36 (Usp36) from Drosophila erecta (Fruit fly).